Here is a 144-residue protein sequence, read N- to C-terminus: Large ribosomal subunit protein uL15 (144 aa).

The segment at 1–57 (MLLNTLSPAAGSKHAPKRLGRGVGSGLGKTGGRGHKGQKSRSGGKVRPGFEGGQMPL) is disordered. A compositionally biased stretch (gly residues) spans 21–31 (RGVGSGLGKTG). Residues 32-44 (GRGHKGQKSRSGG) are compositionally biased toward basic residues.

It belongs to the universal ribosomal protein uL15 family. Part of the 50S ribosomal subunit.

In terms of biological role, binds to the 23S rRNA. This Vibrio cholerae serotype O1 (strain ATCC 39315 / El Tor Inaba N16961) protein is Large ribosomal subunit protein uL15.